We begin with the raw amino-acid sequence, 402 residues long: Beta-1,4-galactosyltransferase 1 (402 aa).

Residues 1–24 (MKFREPLLGGSAAMPGASLQRACR) lie on the Cytoplasmic side of the membrane. The chain crosses the membrane as a helical; Signal-anchor for type II membrane protein span at residues 25-44 (LLVAVCALHLGVTLVYYLAG). Residues 45–402 (RDLRRLPQLV…KITVDIGTPS (358 aa)) lie on the Lumenal side of the membrane. The tract at residues 77 to 130 (LRLRGVAPPPPLQNSSKPRSRAPSNLDAYSHPGPGPGPGSNLTSAPVPSTTTRS) is disordered. Residues Asn90 and Asn117 are each glycosylated (N-linked (GlcNAc...) asparagine). Positions 116-130 (SNLTSAPVPSTTTRS) are enriched in polar residues. The cysteines at positions 134 and 176 are disulfide-linked. Residues 187–191 (PFRNR), 226–228 (FNR), 253–254 (VD), and Trp314 each bind UDP-alpha-D-galactose. Cys247 and Cys266 form a disulfide bridge. Asp254 is a Mn(2+) binding site. An N-acetyl-D-glucosamine-binding site is contributed by 316-319 (GEDD). A Mn(2+)-binding site is contributed by His347. 347–349 (HSR) contacts UDP-alpha-D-galactose. Position 359 (Arg359) interacts with N-acetyl-D-glucosamine.

Belongs to the glycosyltransferase 7 family. Homodimer; and heterodimer with alpha-lactalbumin to form lactose synthase. Interacts (via N-terminal cytoplasmic domain) with UBE2Q1 (via N-terminus); the interaction is direct. The cofactor is Mn(2+). In terms of processing, the soluble form derives from the membrane forms by proteolytic processing. As to expression, detected in milk (at protein level).

It localises to the golgi apparatus. It is found in the golgi stack membrane. The protein localises to the cell membrane. The protein resides in the cell surface. Its subcellular location is the cell projection. It localises to the filopodium. It is found in the secreted. It carries out the reaction D-glucose + UDP-alpha-D-galactose = lactose + UDP + H(+). It catalyses the reaction an N-acetyl-beta-D-glucosaminyl derivative + UDP-alpha-D-galactose = a beta-D-galactosyl-(1-&gt;4)-N-acetyl-beta-D-glucosaminyl derivative + UDP + H(+). The enzyme catalyses N-acetyl-D-glucosamine + UDP-alpha-D-galactose = beta-D-galactosyl-(1-&gt;4)-N-acetyl-D-glucosamine + UDP + H(+). The catalysed reaction is a beta-D-GlcNAc-(1-&gt;3)-beta-D-Gal-(1-&gt;4)-beta-D-Glc-(1&lt;-&gt;1)-Cer(d18:1(4E)) + UDP-alpha-D-galactose = a neolactoside nLc4Cer(d18:1(4E)) + UDP + H(+). It carries out the reaction a beta-D-glucosylceramide + UDP-alpha-D-galactose = a beta-D-galactosyl-(1-&gt;4)-beta-D-glucosyl-(1&lt;-&gt;1)-ceramide + UDP + H(+). It catalyses the reaction a neolactoside IV(3)-beta-GlcNAc-nLc4Cer + UDP-alpha-D-galactose = a neolactoside nLc6Cer + UDP + H(+). Its pathway is protein modification; protein glycosylation. The Golgi complex form catalyzes the production of lactose in the lactating mammary gland and could also be responsible for the synthesis of complex-type N-linked oligosaccharides in many glycoproteins as well as the carbohydrate moieties of glycolipids. Functionally, the cell surface form functions as a recognition molecule during a variety of cell to cell and cell to matrix interactions, as those occurring during development and egg fertilization, by binding to specific oligosaccharide ligands on opposing cells or in the extracellular matrix. The secreted form is responsible for the synthesis of complex-type to N-linked oligosaccharides in many glycoproteins as well as the carbohydrate moieties of glycolipids. This Bos taurus (Bovine) protein is Beta-1,4-galactosyltransferase 1 (B4GALT1).